We begin with the raw amino-acid sequence, 431 residues long: UDP-N-acetylglucosamine 1-carboxyvinyltransferase (431 aa).

Position 22 to 23 (22 to 23) interacts with phosphoenolpyruvate; sequence KN. Arg102 lines the UDP-N-acetyl-alpha-D-glucosamine pocket. Catalysis depends on Cys126, which acts as the Proton donor. Cys126 is modified (2-(S-cysteinyl)pyruvic acid O-phosphothioketal). 2 residues coordinate UDP-N-acetyl-alpha-D-glucosamine: Asp318 and Ile340.

It belongs to the EPSP synthase family. MurA subfamily.

It is found in the cytoplasm. The enzyme catalyses phosphoenolpyruvate + UDP-N-acetyl-alpha-D-glucosamine = UDP-N-acetyl-3-O-(1-carboxyvinyl)-alpha-D-glucosamine + phosphate. It participates in cell wall biogenesis; peptidoglycan biosynthesis. Functionally, cell wall formation. Adds enolpyruvyl to UDP-N-acetylglucosamine. This chain is UDP-N-acetylglucosamine 1-carboxyvinyltransferase, found in Bartonella quintana (strain Toulouse) (Rochalimaea quintana).